Consider the following 292-residue polypeptide: Shikimate dehydrogenase (NADP(+)) (292 aa).

Residues 25-27 (SKS) and Thr-72 contribute to the shikimate site. Lys-76 functions as the Proton acceptor in the catalytic mechanism. Residues Asn-97 and Asp-113 each coordinate shikimate. Residues 137-141 (GAGGA), 161-166 (NRTQSK), and Met-230 contribute to the NADP(+) site. Shikimate is bound at residue Tyr-232. Gly-254 is a binding site for NADP(+).

It belongs to the shikimate dehydrogenase family. Homodimer.

The catalysed reaction is shikimate + NADP(+) = 3-dehydroshikimate + NADPH + H(+). It functions in the pathway metabolic intermediate biosynthesis; chorismate biosynthesis; chorismate from D-erythrose 4-phosphate and phosphoenolpyruvate: step 4/7. Its function is as follows. Involved in the biosynthesis of the chorismate, which leads to the biosynthesis of aromatic amino acids. Catalyzes the reversible NADPH linked reduction of 3-dehydroshikimate (DHSA) to yield shikimate (SA). This Shewanella sp. (strain ANA-3) protein is Shikimate dehydrogenase (NADP(+)).